The following is a 426-amino-acid chain: Phosphomethylpyrimidine synthase (426 aa).

Substrate is bound by residues Asn65, Met94, Tyr123, His162, 184 to 186, 225 to 228, and Glu264; these read SRG and DGMR. His268 lines the Zn(2+) pocket. Residue Tyr291 participates in substrate binding. His332 serves as a coordination point for Zn(2+). The [4Fe-4S] cluster site is built by Cys408, Cys411, and Cys415.

This sequence belongs to the ThiC family. [4Fe-4S] cluster is required as a cofactor.

It catalyses the reaction 5-amino-1-(5-phospho-beta-D-ribosyl)imidazole + S-adenosyl-L-methionine = 4-amino-2-methyl-5-(phosphooxymethyl)pyrimidine + CO + 5'-deoxyadenosine + formate + L-methionine + 3 H(+). It functions in the pathway cofactor biosynthesis; thiamine diphosphate biosynthesis. Its function is as follows. Catalyzes the synthesis of the hydroxymethylpyrimidine phosphate (HMP-P) moiety of thiamine from aminoimidazole ribotide (AIR) in a radical S-adenosyl-L-methionine (SAM)-dependent reaction. The polypeptide is Phosphomethylpyrimidine synthase (Methanococcus vannielii (strain ATCC 35089 / DSM 1224 / JCM 13029 / OCM 148 / SB)).